The primary structure comprises 2136 residues: U5 small nuclear ribonucleoprotein 200 kDa helicase (2136 aa).

S17 and S26 each carry phosphoserine. A Glycyl lysine isopeptide (Lys-Gly) (interchain with G-Cter in SUMO2) cross-link involves residue K46. Positions 50-80 (TRMGDKAQRTKPQMQEERRAKRRKRDEDRHD) are disordered. The stretch at 54–84 (DKAQRTKPQMQEERRAKRRKRDEDRHDINKM) forms a coiled coil. Phosphoserine is present on S225. Residue T389 is modified to Phosphothreonine. Positions 395–2129 (DLDQGGEALA…YKFSVDVKEA (1735 aa)) are interaction with C9orf78 and WBP4. The Helicase ATP-binding 1 domain maps to 490–673 (RAALETDENL…FLRVDPAKGL (184 aa)). 503-510 (APTGAGKT) is a binding site for ATP. The DEIH box signature appears at 615-618 (DEIH). Residues 684 to 921 (PLEQTYVGIT…NAKDAVNWLG (238 aa)) form the Helicase C-terminal 1 domain. Y709 carries the phosphotyrosine modification. Position 971 is an N6-acetyllysine (K971). The region spanning 981–1286 (VTELGRIASH…SCETQLPVSF (306 aa)) is the SEC63 1 domain. Residues 1282-2136 (LPVSFRHLIL…KEAETDSDSD (855 aa)) are interaction with TSSC4. Positions 1337–1512 (NTVYNSDDNV…WLGCSATSTF (176 aa)) constitute a Helicase ATP-binding 2 domain. An ATP-binding site is contributed by 1350–1357 (APTGSGKT). T1428 is subject to Phosphothreonine. The DEVH box signature appears at 1454–1457 (DEVH). One can recognise a Helicase C-terminal 2 domain in the interval 1545–1753 (PVYHAITKHS…TIENKQDAVD (209 aa)). The residue at position 1765 (T1765) is a Phosphothreonine. The 313-residue stretch at 1812–2124 (PLNLGMIAAY…GCDQEYKFSV (313 aa)) folds into the SEC63 2 domain. S2002 is modified (phosphoserine). Phosphothreonine is present on T2131. A phosphoserine mark is found at S2133 and S2135.

It belongs to the helicase family. SKI2 subfamily. In terms of assembly, component of a core complex containing at least PRPF8, SNRNP200, EFTUD2 and SNRNP40. Component of the U5 snRNP and U4/U6-U5 tri-snRNP complexes, building blocks of the spliceosome. Component of the U4/U6-U5 tri-snRNP complex composed of the U4, U6 and U5 snRNAs and at least PRPF3, PRPF4, PRPF6, PRPF8, PRPF31, SNRNP200, TXNL4A, SNRNP40, DDX23, CD2BP2, PPIH, SNU13, EFTUD2, SART1 and USP39. Component of precatalytic, catalytic and postcatalytic spliceosomal complexes. Component of the minor spliceosome, which splices U12-type introns. Interacts with C9orf78; the interaction is direct and mutually exclusive with its interaction with WBP4. Interacts with WBP4; the interaction is mutually exclusive with its interaction with C9orf78. Interacts with PRPF8. Interacts with TSSC4; the interaction is direct, excludes recruitment of C9ORF78 and WBP4 to SNRNP200 and negatively regulates its RNA helicase activity. As to expression, widely expressed.

The protein resides in the nucleus. The enzyme catalyses ATP + H2O = ADP + phosphate + H(+). Functionally, catalyzes the ATP-dependent unwinding of U4/U6 RNA duplices, an essential step in the assembly of a catalytically active spliceosome. Plays a role in pre-mRNA splicing as a core component of precatalytic, catalytic and postcatalytic spliceosomal complexes. As a component of the minor spliceosome, involved in the splicing of U12-type introns in pre-mRNAs. Involved in spliceosome assembly, activation and disassembly. Mediates changes in the dynamic network of RNA-RNA interactions in the spliceosome. The sequence is that of U5 small nuclear ribonucleoprotein 200 kDa helicase (SNRNP200) from Homo sapiens (Human).